Consider the following 116-residue polypeptide: SGSCSLKTCWLQLADFRKVGDLLKEKYDSAAAMRISRKGKLELVNNRFNSPTPEDLVYVDPSPDYCLRNETTGSLGTQGRLCNKTSEGMDGCELMCCGRGYDQFKSVQVERCHCKF.

Ser1 carries the O-palmitoleoyl serine; by PORCN lipid modification. 2 N-linked (GlcNAc...) asparagine glycosylation sites follow: Asn69 and Asn83. Cys82 and Cys97 form a disulfide bridge.

Belongs to the Wnt family. Post-translationally, palmitoleoylation is required for efficient binding to frizzled receptors. Depalmitoleoylation leads to Wnt signaling pathway inhibition.

The protein resides in the secreted. It localises to the extracellular space. Its subcellular location is the extracellular matrix. Ligand for members of the frizzled family of seven transmembrane receptors. Probable developmental protein. May be a signaling molecule which affects the development of discrete regions of tissues. Is likely to signal over only few cell diameters. The chain is Protein Wnt-5b (WNT-5B) from Plestiodon skiltonianus (Western skink).